Reading from the N-terminus, the 339-residue chain is RNA polymerase II holoenzyme cyclin-like subunit (339 aa).

The disordered stretch occupies residues 48–67 (PNSADSSNGNAANNGGGNGR). Residues 49 to 60 (NSADSSNGNAAN) show a composition bias toward low complexity. Residues 93-194 (RIYCYFLIMK…LIEELQCYLI (102 aa)) enclose the Cyclin N-terminal domain.

Belongs to the cyclin family. Cyclin C subfamily. In terms of assembly, component of the SRB8-11 complex, a regulatory module of the Mediator complex.

It is found in the nucleus. In terms of biological role, component of the SRB8-11 complex. The SRB8-11 complex is a regulatory module of the Mediator complex which is itself involved in regulation of basal and activated RNA polymerase II-dependent transcription. The SRB8-11 complex may be involved in the transcriptional repression of a subset of genes regulated by Mediator. It may inhibit the association of the Mediator complex with RNA polymerase II to form the holoenzyme complex. The SRB8-11 complex phosphorylates the C-terminal domain (CTD) of the largest subunit of RNA polymerase II. This is RNA polymerase II holoenzyme cyclin-like subunit (SSN8) from Candida glabrata (strain ATCC 2001 / BCRC 20586 / JCM 3761 / NBRC 0622 / NRRL Y-65 / CBS 138) (Yeast).